The primary structure comprises 429 residues: Enolase (429 aa).

Gln-163 contacts (2R)-2-phosphoglycerate. The active-site Proton donor is the Glu-205. Positions 242, 287, and 314 each coordinate Mg(2+). (2R)-2-phosphoglycerate-binding residues include Lys-339, Arg-368, Ser-369, and Lys-390. Lys-339 acts as the Proton acceptor in catalysis.

It belongs to the enolase family. Mg(2+) serves as cofactor.

It localises to the cytoplasm. The protein resides in the secreted. Its subcellular location is the cell surface. The catalysed reaction is (2R)-2-phosphoglycerate = phosphoenolpyruvate + H2O. It participates in carbohydrate degradation; glycolysis; pyruvate from D-glyceraldehyde 3-phosphate: step 4/5. Functionally, catalyzes the reversible conversion of 2-phosphoglycerate (2-PG) into phosphoenolpyruvate (PEP). It is essential for the degradation of carbohydrates via glycolysis. The protein is Enolase of Cupriavidus pinatubonensis (strain JMP 134 / LMG 1197) (Cupriavidus necator (strain JMP 134)).